We begin with the raw amino-acid sequence, 311 residues long: tRNA dimethylallyltransferase (311 aa).

Position 13-20 (13-20 (GPTASGKT)) interacts with ATP. A substrate-binding site is contributed by 15–20 (TASGKT). 2 interaction with substrate tRNA regions span residues 38–41 (DSMQ) and 166–170 (QRVLR).

Belongs to the IPP transferase family. As to quaternary structure, monomer. Mg(2+) serves as cofactor.

The catalysed reaction is adenosine(37) in tRNA + dimethylallyl diphosphate = N(6)-dimethylallyladenosine(37) in tRNA + diphosphate. In terms of biological role, catalyzes the transfer of a dimethylallyl group onto the adenine at position 37 in tRNAs that read codons beginning with uridine, leading to the formation of N6-(dimethylallyl)adenosine (i(6)A). This is tRNA dimethylallyltransferase from Staphylococcus aureus (strain Mu3 / ATCC 700698).